We begin with the raw amino-acid sequence, 396 residues long: Lysophospholipid transporter LplT (396 aa).

The Periplasmic portion of the chain corresponds to 1–17; it reads MSESVHTNTSLWSKGMK. A helical membrane pass occupies residues 18 to 38; the sequence is AVIVAQFLSAFGDNALLFATL. Residues 39 to 52 lie on the Cytoplasmic side of the membrane; that stretch reads ALLKAQFYPEWSQP. Residues 53-73 traverse the membrane as a helical segment; sequence ILQMVFVGAYILLAPFVGQVA. The Periplasmic portion of the chain corresponds to 74 to 90; it reads DSFAKGRVMMFANGLKL. The helical transmembrane segment at 91–111 threads the bilayer; it reads LGAASICFGINPFLGYTLVGV. At 112–144 the chain is on the cytoplasmic side; that stretch reads GAAAYSPAKYGILGELTTGSKLVKANGLMEASA. Residues 145–165 form a helical membrane-spanning segment; it reads IAAILLGSVAGGVLADWHVLV. Position 166 (alanine 166) is a topological domain, periplasmic. A helical transmembrane segment spans residues 167-187; the sequence is LAACALAYGGAVVANIYIPKL. The Cytoplasmic portion of the chain corresponds to 188–225; the sequence is AARPGQSWNLINMTRSFLNACTSLWCNGETRFSLVGTS. The helical transmembrane segment at 226-246 threads the bilayer; it reads LFWGAGVTLRFLLVLWVPVAL. The Periplasmic portion of the chain corresponds to 247-255; sequence GITDNATPT. The helical transmembrane segment at 256 to 276 threads the bilayer; that stretch reads YLNAMVAIGIVVGAGAAAKLV. Over 277–279 the chain is Cytoplasmic; the sequence is TLE. A helical membrane pass occupies residues 280 to 300; sequence TVSRCMPAGILIGVVVPIFSL. Topologically, residues 301 to 303 are periplasmic; it reads QHE. A helical transmembrane segment spans residues 304–324; sequence LLPAYALLMLIGVLGGFFVVP. The Cytoplasmic segment spans residues 325 to 342; that stretch reads LNALLQERGKKSVGAGNA. The helical transmembrane segment at 343–363 threads the bilayer; it reads IAVQNLGENSAMLLMLGIYSL. Topologically, residues 364-365 are periplasmic; sequence AV. Residues 366-386 traverse the membrane as a helical segment; that stretch reads MVGIPVVPIGIGFGALFALAI. The Cytoplasmic portion of the chain corresponds to 387-396; that stretch reads TALWIWQRRH.

It belongs to the major facilitator superfamily. LplT (TC 2.A.1.42) family.

Its subcellular location is the cell inner membrane. In terms of biological role, catalyzes the facilitated diffusion of 2-acyl-glycero-3-phosphoethanolamine (2-acyl-GPE) into the cell. The polypeptide is Lysophospholipid transporter LplT (Shigella flexneri).